Here is a 799-residue protein sequence, read N- to C-terminus: Potassium transporter 21 (799 aa).

Topologically, residues methionine 1 to serine 56 are cytoplasmic. A helical transmembrane segment spans residues leucine 57–tyrosine 77. The Extracellular segment spans residues serine 78–glycine 93. A helical membrane pass occupies residues valine 94–alanine 114. The Cytoplasmic segment spans residues leucine 115–lysine 181. Residues isoleucine 182–threonine 202 form a helical membrane-spanning segment. Over proline 203–proline 219 the chain is Extracellular. A helical transmembrane segment spans residues histidine 220–isoleucine 240. Residues glutamine 241 to serine 251 are Cytoplasmic-facing. The helical transmembrane segment at phenylalanine 252–isoleucine 272 threads the bilayer. The Extracellular segment spans residues lysine 273–serine 301. A helical membrane pass occupies residues leucine 302–phenylalanine 322. Residues serine 323–glutamine 328 are Cytoplasmic-facing. A helical membrane pass occupies residues leucine 329–phenylalanine 349. The Extracellular portion of the chain corresponds to leucine 350–phenylalanine 362. The helical transmembrane segment at alanine 363 to isoleucine 383 threads the bilayer. Over glycine 384–glutamine 420 the chain is Cytoplasmic. A helical membrane pass occupies residues leucine 421–phenylalanine 441. The Extracellular segment spans residues lysine 442–glutamate 452. Residues isoleucine 453–valine 473 traverse the membrane as a helical segment. Over tryptophan 474–lysine 475 the chain is Cytoplasmic. The chain crosses the membrane as a helical span at residues isoleucine 476–leucine 496. At serine 497–tyrosine 508 the chain is on the extracellular side. Residues valine 509–valine 529 form a helical membrane-spanning segment. At lysine 530–isoleucine 799 the chain is on the cytoplasmic side.

This sequence belongs to the HAK/KUP transporter (TC 2.A.72.3) family.

It is found in the membrane. Its function is as follows. High-affinity potassium transporter. This Oryza sativa subsp. japonica (Rice) protein is Potassium transporter 21 (HAK21).